The sequence spans 111 residues: Iron-sulfur cluster insertion protein ErpA (111 aa).

3 residues coordinate iron-sulfur cluster: Cys-39, Cys-103, and Cys-105.

Belongs to the HesB/IscA family. Homodimer. The cofactor is iron-sulfur cluster.

In terms of biological role, required for insertion of 4Fe-4S clusters for at least IspG. The protein is Iron-sulfur cluster insertion protein ErpA of Acinetobacter baumannii (strain SDF).